The chain runs to 559 residues: Non-homologous end joining factor IFFO1 (559 aa).

The segment at 21–57 (GPLGDSLGGDHFAGGGDLPPAPLSPAGPAAYSPPGPG) is disordered. Residues 39-57 (PPAPLSPAGPAAYSPPGPG) are compositionally biased toward pro residues. The segment at 65–116 (ALRNDLGSNINVLKTLNLRFRCFLAKVHELERRNRLLEKQLQQALEEGKQGR) is LMNA binding. The region spanning 73-526 (NINVLKTLNL…RLITQSGDRK (454 aa)) is the IF rod domain. A coiled-coil region spans residues 85–117 (RCFLAKVHELERRNRLLEKQLQQALEEGKQGRR). The tract at residues 158–187 (SPARSPAGPLAPSAASLSSSSTSTSTTYSS) is disordered. Residues 237-301 (EIRALYNVLA…LKVEQLKAEL (65 aa)) adopt a coiled-coil conformation. Residues 360–394 (SMGGRKRERKAAVEEDTSLSESEGPRQPDGDEEES) are disordered. Residues 450–525 (EQEDSLEKVI…RRLITQSGDR (76 aa)) are XCCR4 binding. Required for localization to the double-strand breaks (DSBs). A coiled-coil region spans residues 455–501 (LEKVIKDTESLFKTREKEYQETIDQIELELATAKNDMNRHLHEYMEM). Positions 520 to 559 (TQSGDRKSPAFTAVPLSDPPPPPSEAEDSDRDVSSDSSMR) are disordered. Over residues 550-559 (RDVSSDSSMR) the composition is skewed to basic and acidic residues.

The protein belongs to the intermediate filament family. In terms of assembly, forms a heterotetramer with XRCC4. The interaction with XRCC4 is direct, involves LIG4-free XRCC4 and leads to relocalization of IFFO1 at the double-strand break (DSB) sites. Interacts with LMNA; the interaction forms an interior nucleoskeleton and the recruitment to DNA double-strand breaks. As to expression, ubiquitously expressed.

The protein localises to the nucleus. Its subcellular location is the nucleoplasm. It is found in the nucleus inner membrane. It localises to the nucleus matrix. Its function is as follows. Nuclear matrix protein involved in the immobilization of broken DNA ends and the suppression of chromosome translocation during DNA double-strand breaks (DSBs). Interacts with the nuclear lamina component LMNA, resulting in the formation of a nucleoskeleton that relocalizes to the DSB sites in a XRCC4-dependent manner and promotes the immobilization of the broken ends, thereby preventing chromosome translocation. Acts as a scaffold that allows the DNA repair protein XRCC4 and LMNA to assemble into a complex at the DSB sites. In Homo sapiens (Human), this protein is Non-homologous end joining factor IFFO1.